The primary structure comprises 356 residues: Inactive ubiquitin thioesterase OTULINL (356 aa).

Positions 1 to 22 (MAATRSPTRARERERSGAPAAG) are disordered. The segment at 1 to 83 (MAATRSPTRA…KWWIGYLQRK (83 aa)) is required for membrane binding. The OTU domain maps to 128-356 (KCVRQVRRDN…NDRHYHIPVF (229 aa)).

The protein belongs to the peptidase C65 family. Otulin subfamily. Does not bind ubiquitin or ubiquitin-like proteins.

It is found in the cytoplasm. The protein resides in the endoplasmic reticulum membrane. Its subcellular location is the nucleus envelope. Its function is as follows. Lacks deubiquitinase activity. The protein is Inactive ubiquitin thioesterase OTULINL of Homo sapiens (Human).